The sequence spans 96 residues: NADH-ubiquinone oxidoreductase chain 4L (96 aa).

3 consecutive transmembrane segments (helical) span residues 2–22 (IMILYWSLPMILFILGLFCFV), 28–48 (LLSMLLSLEFIVLMLFFMLFI), and 62–82 (MFLTFSVCEGALGLSILVSMI).

The protein belongs to the complex I subunit 4L family.

The protein resides in the mitochondrion membrane. The enzyme catalyses a ubiquinone + NADH + 5 H(+)(in) = a ubiquinol + NAD(+) + 4 H(+)(out). In terms of biological role, core subunit of the mitochondrial membrane respiratory chain NADH dehydrogenase (Complex I) that is believed to belong to the minimal assembly required for catalysis. Complex I functions in the transfer of electrons from NADH to the respiratory chain. The immediate electron acceptor for the enzyme is believed to be ubiquinone. This is NADH-ubiquinone oxidoreductase chain 4L (mt:ND4L) from Drosophila melanogaster (Fruit fly).